Here is a 213-residue protein sequence, read N- to C-terminus: Large ribosomal subunit protein uL1 (213 aa).

Belongs to the universal ribosomal protein uL1 family. In terms of assembly, part of the 50S ribosomal subunit.

In terms of biological role, probably involved in E site tRNA release. Binds directly to 23S rRNA. Functionally, protein L1 is also a translational repressor protein, it controls the translation of the L1 operon by binding to its mRNA. Thus it also controls transcription of L10 and L12 by translational coupling. Unlike the case in E.coli, where the site is in the untranslated mRNA leader, this site is within the L1 protein's structural gene. This is Large ribosomal subunit protein uL1 from Methanococcus vannielii (strain ATCC 35089 / DSM 1224 / JCM 13029 / OCM 148 / SB).